The following is a 1383-amino-acid chain: PAS domain-containing serine/threonine-protein kinase (1383 aa).

Residue M1 is modified to N-acetylmethionine. Phosphoserine is present on S19. T31 is modified (phosphothreonine). PAS domains lie at 117–188 (SGSL…VEAD) and 333–400 (YQAS…SVQL). S1000 carries the phosphoserine modification. The Protein kinase domain maps to 1059–1311 (YNTISPLGSG…LEKLIRDPWV (253 aa)). ATP is bound by residues 1065 to 1073 (LGSGAFGFV), K1088, and 1142 to 1149 (EKHGSGMD). The Proton acceptor role is filled by D1188. D1206 is an ATP binding site. T1221 and T1225 each carry phosphothreonine; by autocatalysis. A disordered region spans residues 1344–1383 (GSRSPSEMAQREGLCGPPAPRETRGDQHCLHLKDPSLPVS). Basic and acidic residues predominate over residues 1364-1377 (RETRGDQHCLHLKD).

The protein belongs to the protein kinase superfamily. CAMK Ser/Thr protein kinase family. In terms of processing, autophosphorylated on Thr-1221 and Thr-1225. Autophosphorylation is activated by phospholipids. As to expression, ubiquitously expressed. Strongly up-regulated in postmeiotic germ cells during spermatogenesis.

It localises to the cytoplasm. The protein localises to the nucleus. The catalysed reaction is L-seryl-[protein] + ATP = O-phospho-L-seryl-[protein] + ADP + H(+). It carries out the reaction L-threonyl-[protein] + ATP = O-phospho-L-threonyl-[protein] + ADP + H(+). Protein kinase activity is inhibited by the first PAS domain: binding of an unidentified ligand desinhibits the protein kinase activity. May be activated by autophosphorylation on Thr-1221 and Thr-1225. Autophosphorylation is enhanced upon phosphatidylinositol monophosphate (phosphatidylinositol 4-phosphate) binding and inhibited upon phosphatidylinositol bi- and tri-phosphate binding. In contrast, phosphorylation of target proteins is inhibited upon all phosphatidylinositol-binding (phosphatidylinositol mono- bi- and tri-phosphate). Its function is as follows. Serine/threonine-protein kinase involved in energy homeostasis and protein translation. Phosphorylates EEF1A1, GYS1, PDX1 and RPS6. Probably plays a role under changing environmental conditions (oxygen, glucose, nutrition), rather than under standard conditions. Acts as a sensor involved in energy homeostasis: regulates glycogen synthase synthesis by mediating phosphorylation of GYS1, leading to GYS1 inactivation. May be involved in glucose-stimulated insulin production in pancreas and regulation of glucagon secretion by glucose in alpha cells; however such data require additional evidences. May play a role in regulation of protein translation by phosphorylating EEF1A1, leading to increase translation efficiency. May also participate in respiratory regulation. The polypeptide is PAS domain-containing serine/threonine-protein kinase (Pask) (Mus musculus (Mouse)).